Reading from the N-terminus, the 78-residue chain is Large ribosomal subunit protein eL20 (78 aa).

This sequence belongs to the eukaryotic ribosomal protein eL20 family. In terms of assembly, part of the 50S ribosomal subunit. Binds 23S rRNA.

The polypeptide is Large ribosomal subunit protein eL20 (Pyrobaculum arsenaticum (strain DSM 13514 / JCM 11321 / PZ6)).